The chain runs to 149 residues: Large ribosomal subunit protein uL15 (149 aa).

Composition is skewed to basic residues over residues 1–14 (MPTRFSKTRKHRGH) and 21–30 (RVGKHRKHPG). The segment at 1–43 (MPTRFSKTRKHRGHVSAGKGRVGKHRKHPGGRGMAGGQHHHRT) is disordered.

Belongs to the universal ribosomal protein uL15 family. As to quaternary structure, component of the large ribosomal subunit (LSU). Mature N.crassa ribosomes consist of a small (40S) and a large (60S) subunit. The 40S small subunit contains 1 molecule of ribosomal RNA (18S rRNA) and at least 32 different proteins. The large 60S subunit contains 3 rRNA molecules (26S, 5.8S and 5S rRNA) and at least 42 different proteins.

The protein resides in the cytoplasm. Functionally, component of the ribosome, a large ribonucleoprotein complex responsible for the synthesis of proteins in the cell. The small ribosomal subunit (SSU) binds messenger RNAs (mRNAs) and translates the encoded message by selecting cognate aminoacyl-transfer RNA (tRNA) molecules. The large subunit (LSU) contains the ribosomal catalytic site termed the peptidyl transferase center (PTC), which catalyzes the formation of peptide bonds, thereby polymerizing the amino acids delivered by tRNAs into a polypeptide chain. The nascent polypeptides leave the ribosome through a tunnel in the LSU and interact with protein factors that function in enzymatic processing, targeting, and the membrane insertion of nascent chains at the exit of the ribosomal tunnel. This chain is Large ribosomal subunit protein uL15 (rpl-28), found in Neurospora crassa (strain ATCC 24698 / 74-OR23-1A / CBS 708.71 / DSM 1257 / FGSC 987).